A 270-amino-acid chain; its full sequence is Undecaprenyl-diphosphatase 1 (270 aa).

The next 7 helical transmembrane spans lie at 5-25, 42-62, 89-109, 117-137, 192-212, 220-240, and 250-270; these read YYILKYLILGLFQGLTEPIPI, IEGFSFELLVNSASLLAVLLI, FFFIIYLVIATIPAGVIGVLF, LKGVKMVGISLLITAVGLWII, FSFLLYIPVSLGGLLLSITDI, TLFVPYIVAFIATFIMTYISL, and GNLKYFSFYCIIVGVLTLIFL.

The protein belongs to the UppP family.

It localises to the cell membrane. It carries out the reaction di-trans,octa-cis-undecaprenyl diphosphate + H2O = di-trans,octa-cis-undecaprenyl phosphate + phosphate + H(+). Its function is as follows. Catalyzes the dephosphorylation of undecaprenyl diphosphate (UPP). Confers resistance to bacitracin. This chain is Undecaprenyl-diphosphatase 1, found in Bacillus cereus (strain ATCC 10987 / NRS 248).